The primary structure comprises 150 residues: MRIWVDADACPNVIKEILFRAAERVKTPLILVANQPLKTPPSQYIRSLQVAPGFDVADNHIVQNVEPGELVITADIPLAAEVIDKGAHALNPRGEFYSKENIRQRLMMRDFMETMRSSGEHTGGPAAFNHGDRMEFANQLDRFLAKTSKS.

The protein belongs to the UPF0178 family.

This chain is UPF0178 protein HCH_06960, found in Hahella chejuensis (strain KCTC 2396).